The chain runs to 297 residues: ClpXP adapter protein SpxH (297 aa).

Belongs to the SpxH family. As to quaternary structure, interacts with Spx.

Its subcellular location is the cytoplasm. In terms of biological role, adapter protein required for efficient degradation of Spx by ClpXP under non-stress conditions. Interaction with Spx stabilizes Spx and exposes the C-terminus of Spx for recognition and proteolysis by ClpXP. This is ClpXP adapter protein SpxH from Bacillus cereus (strain ATCC 10987 / NRS 248).